The following is a 621-amino-acid chain: Cystathionine gamma-synthase (621 aa).

Residue Lys429 is modified to N6-(pyridoxal phosphate)lysine.

It belongs to the trans-sulfuration enzymes family. MET7 subfamily. As to quaternary structure, both met-3 and met-7 are required to form a functional cystathionine gamma-synthase. Pyridoxal 5'-phosphate is required as a cofactor.

The catalysed reaction is O-succinyl-L-homoserine + L-cysteine = L,L-cystathionine + succinate + H(+). It participates in amino-acid biosynthesis; L-methionine biosynthesis via de novo pathway; L-cystathionine from O-succinyl-L-homoserine: step 1/1. In terms of biological role, catalyzes the formation of L-cystathionine from O-succinyl-L-homoserine (OSHS) and L-cysteine, via a gamma-replacement reaction. In the absence of thiol, catalyzes gamma-elimination to form 2-oxobutanoate, succinate and ammonia. This is Cystathionine gamma-synthase (met-7) from Neurospora crassa (strain ATCC 24698 / 74-OR23-1A / CBS 708.71 / DSM 1257 / FGSC 987).